Here is a 119-residue protein sequence, read N- to C-terminus: Large ribosomal subunit protein uL18 (119 aa).

This sequence belongs to the universal ribosomal protein uL18 family. As to quaternary structure, part of the 50S ribosomal subunit; part of the 5S rRNA/L5/L18/L25 subcomplex. Contacts the 5S and 23S rRNAs.

Its function is as follows. This is one of the proteins that bind and probably mediate the attachment of the 5S RNA into the large ribosomal subunit, where it forms part of the central protuberance. The chain is Large ribosomal subunit protein uL18 from Chelativorans sp. (strain BNC1).